We begin with the raw amino-acid sequence, 98 residues long: NADH-ubiquinone oxidoreductase chain 4L (98 aa).

The next 3 helical transmembrane spans lie at P2–F22, S29–L49, and I61–V81.

It belongs to the complex I subunit 4L family. As to quaternary structure, core subunit of respiratory chain NADH dehydrogenase (Complex I) which is composed of 45 different subunits.

It is found in the mitochondrion inner membrane. The catalysed reaction is a ubiquinone + NADH + 5 H(+)(in) = a ubiquinol + NAD(+) + 4 H(+)(out). Core subunit of the mitochondrial membrane respiratory chain NADH dehydrogenase (Complex I) which catalyzes electron transfer from NADH through the respiratory chain, using ubiquinone as an electron acceptor. Part of the enzyme membrane arm which is embedded in the lipid bilayer and involved in proton translocation. The chain is NADH-ubiquinone oxidoreductase chain 4L (MT-ND4L) from Avahi unicolor (Sambirano woolly lemur).